Consider the following 205-residue polypeptide: Adenylyl-sulfate kinase (205 aa).

31–38 (GLSGAGKS) contributes to the ATP binding site. Ser-105 serves as the catalytic Phosphoserine intermediate.

This sequence belongs to the APS kinase family.

The enzyme catalyses adenosine 5'-phosphosulfate + ATP = 3'-phosphoadenylyl sulfate + ADP + H(+). It functions in the pathway sulfur metabolism; hydrogen sulfide biosynthesis; sulfite from sulfate: step 2/3. In terms of biological role, catalyzes the synthesis of activated sulfate. In Shewanella denitrificans (strain OS217 / ATCC BAA-1090 / DSM 15013), this protein is Adenylyl-sulfate kinase.